Here is a 180-residue protein sequence, read N- to C-terminus: Large ribosomal subunit protein uL5 (180 aa).

The protein belongs to the universal ribosomal protein uL5 family. As to quaternary structure, forms a bridge to the 30S subunit in the 70S ribosome. Part of the 50S ribosomal subunit; part of the 5S rRNA/L5/L18/L25 (CTC) subcomplex. Is known to contact the 5S rRNA, 23S rRNA and the P site tRNA.

Functionally, this is one of the proteins that bind and probably mediate the attachment of the 5S RNA into the large ribosomal subunit, where it forms part of the central protuberance. In the 70S ribosome it contacts protein S13 of the 30S subunit (bridge B1b), connecting the 2 subunits; this bridge is implicated in subunit movement. Contacts the P site tRNA; the 5S rRNA and some of its associated proteins might help stabilize positioning of ribosome-bound tRNAs. The protein is Large ribosomal subunit protein uL5 (rplE) of Deinococcus radiodurans (strain ATCC 13939 / DSM 20539 / JCM 16871 / CCUG 27074 / LMG 4051 / NBRC 15346 / NCIMB 9279 / VKM B-1422 / R1).